We begin with the raw amino-acid sequence, 121 residues long: Large ribosomal subunit protein uL14 (121 aa).

It belongs to the universal ribosomal protein uL14 family. In terms of assembly, part of the 50S ribosomal subunit. Forms a cluster with proteins L3 and L19. In the 70S ribosome, L14 and L19 interact and together make contacts with the 16S rRNA in bridges B5 and B8.

In terms of biological role, binds to 23S rRNA. Forms part of two intersubunit bridges in the 70S ribosome. The polypeptide is Large ribosomal subunit protein uL14 (Synechococcus sp. (strain WH7803)).